A 451-amino-acid chain; its full sequence is tRNA modification GTPase MnmE (451 aa).

(6S)-5-formyl-5,6,7,8-tetrahydrofolate is bound by residues Arg-28, Glu-85, and Lys-124. The region spanning 220-377 (GMNVVLVGQP…LRSELLRVAG (158 aa)) is the TrmE-type G domain. Residue Asn-230 coordinates K(+). Residues 230–235 (NVGKSS), 249–255 (TDIAGTT), and 274–277 (DTAG) each bind GTP. Ser-234 contributes to the Mg(2+) binding site. Thr-249, Ile-251, and Thr-254 together coordinate K(+). Thr-255 lines the Mg(2+) pocket. Lys-451 is a (6S)-5-formyl-5,6,7,8-tetrahydrofolate binding site.

Belongs to the TRAFAC class TrmE-Era-EngA-EngB-Septin-like GTPase superfamily. TrmE GTPase family. As to quaternary structure, homodimer. Heterotetramer of two MnmE and two MnmG subunits. K(+) is required as a cofactor.

Its subcellular location is the cytoplasm. Exhibits a very high intrinsic GTPase hydrolysis rate. Involved in the addition of a carboxymethylaminomethyl (cmnm) group at the wobble position (U34) of certain tRNAs, forming tRNA-cmnm(5)s(2)U34. In Aromatoleum aromaticum (strain DSM 19018 / LMG 30748 / EbN1) (Azoarcus sp. (strain EbN1)), this protein is tRNA modification GTPase MnmE.